Consider the following 173-residue polypeptide: Photosystem I assembly protein Ycf3 (173 aa).

3 TPR repeats span residues 35–68 (AYVYYRDGLSAQNDGDYAEALENYDEALKLETDP), 72–105 (GETLKNMAIIYMSNGEEERAIETYQKALDENPKQ), and 120–153 (GRIAEESGQQDDADRWFDQAADVWTQAVRLNPGG).

This sequence belongs to the Ycf3 family.

Its subcellular location is the cellular thylakoid membrane. Functionally, essential for the assembly of the photosystem I (PSI) complex. May act as a chaperone-like factor to guide the assembly of the PSI subunits. The sequence is that of Photosystem I assembly protein Ycf3 from Synechococcus sp. (strain CC9902).